Reading from the N-terminus, the 120-residue chain is NAD(P)H-quinone oxidoreductase subunit 3, chloroplastic (120 aa).

Helical transmembrane passes span 9-29, 64-84, and 88-108; these read IFWA…LISG, MFAL…PWAM, and VLGV…IVGL.

The protein belongs to the complex I subunit 3 family. In terms of assembly, NDH is composed of at least 16 different subunits, 5 of which are encoded in the nucleus.

It localises to the plastid. Its subcellular location is the chloroplast thylakoid membrane. It carries out the reaction a plastoquinone + NADH + (n+1) H(+)(in) = a plastoquinol + NAD(+) + n H(+)(out). The catalysed reaction is a plastoquinone + NADPH + (n+1) H(+)(in) = a plastoquinol + NADP(+) + n H(+)(out). Functionally, NDH shuttles electrons from NAD(P)H:plastoquinone, via FMN and iron-sulfur (Fe-S) centers, to quinones in the photosynthetic chain and possibly in a chloroplast respiratory chain. The immediate electron acceptor for the enzyme in this species is believed to be plastoquinone. Couples the redox reaction to proton translocation, and thus conserves the redox energy in a proton gradient. This Ceratophyllum demersum (Rigid hornwort) protein is NAD(P)H-quinone oxidoreductase subunit 3, chloroplastic.